A 298-amino-acid chain; its full sequence is Homoserine kinase (298 aa).

An ATP-binding site is contributed by 85-95 (PMGGLGSSAAS).

Belongs to the GHMP kinase family. Homoserine kinase subfamily.

The protein resides in the cytoplasm. It catalyses the reaction L-homoserine + ATP = O-phospho-L-homoserine + ADP + H(+). It functions in the pathway amino-acid biosynthesis; L-threonine biosynthesis; L-threonine from L-aspartate: step 4/5. In terms of biological role, catalyzes the ATP-dependent phosphorylation of L-homoserine to L-homoserine phosphate. The protein is Homoserine kinase of Methanopyrus kandleri (strain AV19 / DSM 6324 / JCM 9639 / NBRC 100938).